The primary structure comprises 421 residues: Vinorine synthase (421 aa).

Catalysis depends on proton acceptor residues H160 and D362.

Belongs to the plant acyltransferase family. Monomer. As to expression, mainly expressed in roots and, to a lower level, in leaves.

The enzyme catalyses 16-epivellosimine + acetyl-CoA = vinorine + CoA. It functions in the pathway alkaloid biosynthesis; ajmaline biosynthesis. With respect to regulation, complete inhibition by 4-(2-aminoethyl)-benzenesulfonyl fluoride (AEBSF), N-tosyl-L-phenylalanine chloromethylketone (TPCK), Hg(2+) and diethyl-pyrocarbonate (DEPC). 50% inhibition by N-(N-(L-3-trans-carboxirane-2-carbonyl)-L-leucyl)-agmanitine (E-64), N-alpha-p-tosyl-L-lysine chloromethylketone (TLCK) and phenylmethylsulfonyl fluoride (PMSF). Functionally, acetyltransferase involved in the biosynthesis of ajmaline-type monoterpenoid indole alkaloids (MIAs) natural products, important plant-derived pharmaceuticals used in the therapy of heart disorders. Catalyzes the conversion of 16-epivellosimine to vinorine, precursor of vomilenine, an intermediate chemical in the biosynthesis of ajmaline. Acts on gardneral, but not on polyneuridine aldehyde or N-methylgardneral. The chain is Vinorine synthase from Rauvolfia serpentina (Serpentine wood).